The following is a 455-amino-acid chain: MGLSVVILAAGKGSRMNSNKPKVLQTLAAKTLIEHVVSSVEKLNPDNIVVVTGHLKEQVEDALQGRNITFVYQQQQLGTGHAVLQALPYLKEQKVLILYGDVPLISTEVLENLVDTTNDDDLGVLTAFVENPQGLGRIVRDKFGAVTEIVEEKDANDIQRQIKEINTGIYCVHKNLLQKWLPEIKANNVQKEYYLTDIITFAKADHVSINVTHPINEFEILGVNDRTQLASLERVWQRNVAEKIMAKGVSIADPNRFDVRGNLDVGKDCWIDINVIIKGNVKLGNNVVIGANCILKNCIIEDNVRIKSNSMVDGSIIREGAIVGPFARVRPECDVKEGAVIGNFVEAKKTILGKGSKASHLTYLGDSEIGANCNIGAGVITCNYDGVNKHKTVIGDYAFIGSDSQLIAPVNIGQGATVGAGSTIVKDVPADNLAISRARQRHIDTWQRSVKKTDK.

The segment at Met1–Arg226 is pyrophosphorylase. Residues Leu8 to Gly11, Lys22, Gln73, Gly78 to Thr79, Tyr99 to Asp101, Gly136, Glu151, Asn166, and Asn224 each bind UDP-N-acetyl-alpha-D-glucosamine. Mg(2+) is bound at residue Asp101. Asn224 lines the Mg(2+) pocket. The linker stretch occupies residues Thr227–Lys247. The segment at Gly248–Lys455 is N-acetyltransferase. Arg330 and Lys348 together coordinate UDP-N-acetyl-alpha-D-glucosamine. His360 functions as the Proton acceptor in the catalytic mechanism. Positions 363 and 374 each coordinate UDP-N-acetyl-alpha-D-glucosamine. Acetyl-CoA is bound by residues Ala377, Asn383–Tyr384, Ser402, Ala420, and Arg437.

It in the N-terminal section; belongs to the N-acetylglucosamine-1-phosphate uridyltransferase family. The protein in the C-terminal section; belongs to the transferase hexapeptide repeat family. In terms of assembly, homotrimer. The cofactor is Mg(2+).

The protein resides in the cytoplasm. It carries out the reaction alpha-D-glucosamine 1-phosphate + acetyl-CoA = N-acetyl-alpha-D-glucosamine 1-phosphate + CoA + H(+). The enzyme catalyses N-acetyl-alpha-D-glucosamine 1-phosphate + UTP + H(+) = UDP-N-acetyl-alpha-D-glucosamine + diphosphate. Its pathway is nucleotide-sugar biosynthesis; UDP-N-acetyl-alpha-D-glucosamine biosynthesis; N-acetyl-alpha-D-glucosamine 1-phosphate from alpha-D-glucosamine 6-phosphate (route II): step 2/2. It functions in the pathway nucleotide-sugar biosynthesis; UDP-N-acetyl-alpha-D-glucosamine biosynthesis; UDP-N-acetyl-alpha-D-glucosamine from N-acetyl-alpha-D-glucosamine 1-phosphate: step 1/1. It participates in bacterial outer membrane biogenesis; LPS lipid A biosynthesis. In terms of biological role, catalyzes the last two sequential reactions in the de novo biosynthetic pathway for UDP-N-acetylglucosamine (UDP-GlcNAc). The C-terminal domain catalyzes the transfer of acetyl group from acetyl coenzyme A to glucosamine-1-phosphate (GlcN-1-P) to produce N-acetylglucosamine-1-phosphate (GlcNAc-1-P), which is converted into UDP-GlcNAc by the transfer of uridine 5-monophosphate (from uridine 5-triphosphate), a reaction catalyzed by the N-terminal domain. The chain is Bifunctional protein GlmU from Francisella tularensis subsp. tularensis (strain SCHU S4 / Schu 4).